We begin with the raw amino-acid sequence, 349 residues long: Cyclic amide hydrolase (349 aa).

The interval methionine 1–serine 90 is RU A. A substrate-binding site is contributed by arginine 38. The RU B stretch occupies residues glycine 99–proline 231. Lysine 149 is an active-site residue. Substrate contacts are provided by residues arginine 176, serine 214–alanine 215, lysine 311, and serine 330–glycine 331. Serine 214 functions as the Nucleophile in the catalytic mechanism. Positions tyrosine 237–arginine 349 are RU C.

This sequence belongs to the cyclic amide hydrolase (CyAH) family. Homotetramer.

Functionally, cyclic amide hydrolase of unknown substrate specificity. Catalyzes the hydrolytic ring-opening of a cyclic amide. Does not act on cyanuric acid nor barbituric acid. This Rhodococcus sp protein is Cyclic amide hydrolase.